Reading from the N-terminus, the 883-residue chain is Alanine--tRNA ligase (883 aa).

The Zn(2+) site is built by histidine 560, histidine 564, cysteine 665, and histidine 669.

The protein belongs to the class-II aminoacyl-tRNA synthetase family. Zn(2+) serves as cofactor.

Its subcellular location is the cytoplasm. It catalyses the reaction tRNA(Ala) + L-alanine + ATP = L-alanyl-tRNA(Ala) + AMP + diphosphate. Catalyzes the attachment of alanine to tRNA(Ala) in a two-step reaction: alanine is first activated by ATP to form Ala-AMP and then transferred to the acceptor end of tRNA(Ala). Also edits incorrectly charged Ser-tRNA(Ala) and Gly-tRNA(Ala) via its editing domain. This is Alanine--tRNA ligase from Mesomycoplasma hyopneumoniae (strain J / ATCC 25934 / NCTC 10110) (Mycoplasma hyopneumoniae).